The chain runs to 282 residues: Bis(5'-nucleosyl)-tetraphosphatase, symmetrical (282 aa).

This sequence belongs to the Ap4A hydrolase family.

The catalysed reaction is P(1),P(4)-bis(5'-adenosyl) tetraphosphate + H2O = 2 ADP + 2 H(+). Functionally, hydrolyzes diadenosine 5',5'''-P1,P4-tetraphosphate to yield ADP. This chain is Bis(5'-nucleosyl)-tetraphosphatase, symmetrical, found in Escherichia fergusonii (strain ATCC 35469 / DSM 13698 / CCUG 18766 / IAM 14443 / JCM 21226 / LMG 7866 / NBRC 102419 / NCTC 12128 / CDC 0568-73).